We begin with the raw amino-acid sequence, 527 residues long: Homeobox protein NOBOX (527 aa).

4 disordered regions span residues 1–126, 194–245, 271–306, and 488–527; these read MEPT…DLKK, VEKL…DVFP, VTPP…RDVP, and ETGS…GAKE. A DNA-binding region (homeobox) is located at residues 136–195; it reads RKKTRTLYRSDQLEELERIFQEDHYPDSDKRHEISQMVGVTPQRIMVWFQNRRAKWRKVE. The segment covering 194-203 has biased composition (basic and acidic residues); sequence VEKLNEKETK. Residues 488-506 are compositionally biased toward polar residues; the sequence is ETGSSLSKMSDEQTSSSLE. Positions 511 to 527 are enriched in basic and acidic residues; it reads EEVRDKNKNSHAAGAKE.

In terms of tissue distribution, specifically expressed in ovaries and testes. In ovaries, expressed in oocytes from primordial through antral follicles but not in granulosa cells, theca cells and corpora lutea.

Its subcellular location is the nucleus. Its function is as follows. Transcription factor which plays an essential role in postnatal follicle development. Binds preferentially to the DNA sequences 5'-TAATTG-3', 5'-TAGTTG-3' and 5'-TAATTA-3'. Directly regulates the transcription of POU5F1 and GDF9 during early folliculogenesis. The sequence is that of Homeobox protein NOBOX (Nobox) from Mus musculus (Mouse).